We begin with the raw amino-acid sequence, 616 residues long: Dihydroxy-acid dehydratase (616 aa).

Aspartate 81 lines the Mg(2+) pocket. Cysteine 122 contacts [2Fe-2S] cluster. Aspartate 123 and lysine 124 together coordinate Mg(2+). Position 124 is an N6-carboxylysine (lysine 124). Cysteine 195 contributes to the [2Fe-2S] cluster binding site. Glutamate 491 contributes to the Mg(2+) binding site. Serine 517 acts as the Proton acceptor in catalysis.

This sequence belongs to the IlvD/Edd family. As to quaternary structure, homodimer. [2Fe-2S] cluster is required as a cofactor. Requires Mg(2+) as cofactor.

It catalyses the reaction (2R)-2,3-dihydroxy-3-methylbutanoate = 3-methyl-2-oxobutanoate + H2O. The enzyme catalyses (2R,3R)-2,3-dihydroxy-3-methylpentanoate = (S)-3-methyl-2-oxopentanoate + H2O. It participates in amino-acid biosynthesis; L-isoleucine biosynthesis; L-isoleucine from 2-oxobutanoate: step 3/4. Its pathway is amino-acid biosynthesis; L-valine biosynthesis; L-valine from pyruvate: step 3/4. Its function is as follows. Functions in the biosynthesis of branched-chain amino acids. Catalyzes the dehydration of (2R,3R)-2,3-dihydroxy-3-methylpentanoate (2,3-dihydroxy-3-methylvalerate) into 2-oxo-3-methylpentanoate (2-oxo-3-methylvalerate) and of (2R)-2,3-dihydroxy-3-methylbutanoate (2,3-dihydroxyisovalerate) into 2-oxo-3-methylbutanoate (2-oxoisovalerate), the penultimate precursor to L-isoleucine and L-valine, respectively. The chain is Dihydroxy-acid dehydratase from Escherichia coli (strain K12 / MC4100 / BW2952).